The following is a 423-amino-acid chain: Heat shock transcription factor, X-linked (423 aa).

Residues Met1 to Glu25 are compositionally biased toward basic and acidic residues. Disordered regions lie at residues Met1–Ser56, Lys215–Gln303, and Pro397–Thr423. Residues Pro98–Ser282 mediate DNA binding. A Glycyl lysine isopeptide (Lys-Gly) (interchain with G-Cter in SUMO1) cross-link involves residue Lys215. Residues His243–Pro254 are compositionally biased toward polar residues.

Belongs to the HSF family. Testis-specific.

Its subcellular location is the nucleus. The protein resides in the cytoplasm. The chain is Heat shock transcription factor, X-linked (HSFX1) from Homo sapiens (Human).